Reading from the N-terminus, the 136-residue chain is Ig heavy chain V-A2 region P-MU-3 (136 aa).

Positions 1–19 (METGLRWLLLVAVLKGVQC) are cleaved as a signal peptide. The residue at position 20 (Q20) is a Pyrrolidone carboxylic acid. Residues 20–127 (QSVKESEGGL…ENEFFNAIWG (108 aa)) enclose the Ig-like domain.

This is Ig heavy chain V-A2 region P-MU-3 from Oryctolagus cuniculus (Rabbit).